The chain runs to 233 residues: AA9 family lytic polysaccharide monooxygenase A (233 aa).

Positions methionine 1–alanine 17 are cleaved as a signal peptide. 2 residues coordinate Cu(2+): histidine 18 and histidine 90. 2 disulfides stabilise this stretch: cysteine 59-cysteine 180 and cysteine 150-cysteine 233. Asparagine 132 carries N-linked (GlcNAc...) asparagine glycosylation. Residues histidine 166 and glutamine 175 each contribute to the O2 site. Tyrosine 177 serves as a coordination point for Cu(2+).

It belongs to the polysaccharide monooxygenase AA9 family. It depends on Cu(2+) as a cofactor.

The protein localises to the secreted. The enzyme catalyses [(1-&gt;4)-beta-D-glucosyl]n+m + reduced acceptor + O2 = 4-dehydro-beta-D-glucosyl-[(1-&gt;4)-beta-D-glucosyl]n-1 + [(1-&gt;4)-beta-D-glucosyl]m + acceptor + H2O.. Lytic polysaccharide monooxygenase (LPMO) that depolymerizes crystalline and amorphous polysaccharides via the oxidation of scissile alpha- or beta-(1-4)-glycosidic bonds, yielding C1 and C4 oxidation products. Catalysis by LPMOs requires the reduction of the active-site copper from Cu(II) to Cu(I) by a reducing agent and H(2)O(2) or O(2) as a cosubstrate. Shows endoglucanase activity on tamarind xyloglucan, as well as on beechwood xylan when combined with phosphoric acid swollen cellulose (PASC). Shows no activity on wheat arabinoxylan, konjac glucomannan, acetylated spruce galactoglucomannan, or cellopentaose. The chain is AA9 family lytic polysaccharide monooxygenase A from Thermothielavioides terrestris (strain ATCC 38088 / NRRL 8126) (Thielavia terrestris).